Reading from the N-terminus, the 430-residue chain is Tryptophan synthase beta chain (430 aa).

Lys95 bears the N6-(pyridoxal phosphate)lysine mark.

The protein belongs to the TrpB family. In terms of assembly, tetramer of two alpha and two beta chains. Requires pyridoxal 5'-phosphate as cofactor.

It carries out the reaction (1S,2R)-1-C-(indol-3-yl)glycerol 3-phosphate + L-serine = D-glyceraldehyde 3-phosphate + L-tryptophan + H2O. It functions in the pathway amino-acid biosynthesis; L-tryptophan biosynthesis; L-tryptophan from chorismate: step 5/5. In terms of biological role, the beta subunit is responsible for the synthesis of L-tryptophan from indole and L-serine. In Halobacterium salinarum (strain ATCC 29341 / DSM 671 / R1), this protein is Tryptophan synthase beta chain.